The sequence spans 444 residues: MFS-type transporter dbaD (444 aa).

Over residues 1-13 (MTEQPPQNHSVDL) the composition is skewed to polar residues. Positions 1–57 (MTEQPPQNHSVDLNQNEDNNENDYRSSSATDAERPCEPKIEESTAKPPTGPPAPPPP) are disordered. N-linked (GlcNAc...) asparagine glycosylation is present at Asn-8. The segment covering 31 to 44 (DAERPCEPKIEEST) has biased composition (basic and acidic residues). A compositionally biased stretch (pro residues) spans 48-57 (PTGPPAPPPP). 11 consecutive transmembrane segments (helical) span residues 62–82 (LVAW…WGIM), 107–127 (WIGS…GSIY), 134–154 (ALLV…SLCK), 159–179 (VLLA…VPCV), 192–212 (TALG…PIVL), 223–243 (WSVR…IAVM), 267–287 (MAFT…LFYI), 301–323 (MAFY…PNAM), 330–350 (FNLI…LLAV), 356–376 (LIVI…LPPL), and 394–414 (MGFG…GAIL). Asn-421 carries N-linked (GlcNAc...) asparagine glycosylation. A helical transmembrane segment spans residues 424-444 (GLWVYGGVTSLVAGFIICIAV).

The protein belongs to the major facilitator superfamily. Monocarboxylate porter (TC 2.A.1.13) family.

It is found in the cell membrane. MFS-type transporter; part of the gene cluster that mediates the biosynthesis of the antibiotic 2,4- dihydroxy-3-methyl-6-(2-oxopropyl)benzaldehyde (DHMBA) and its derivatives. Is probably involved in the transport of the metabolites to the environment. This Emericella nidulans (strain FGSC A4 / ATCC 38163 / CBS 112.46 / NRRL 194 / M139) (Aspergillus nidulans) protein is MFS-type transporter dbaD.